The sequence spans 230 residues: Urease accessory protein UreE (230 aa).

Composition is skewed to basic and acidic residues over residues 182–193 (HVHVDSPLDEPH) and 204–230 (SHGDGHSHSHSHDHDHDHRHDDHDHKH). The tract at residues 182–230 (HVHVDSPLDEPHGSGLHVHAIHSHGDGHSHSHSHDHDHDHRHDDHDHKH) is disordered.

This sequence belongs to the UreE family.

The protein localises to the cytoplasm. In terms of biological role, involved in urease metallocenter assembly. Binds nickel. Probably functions as a nickel donor during metallocenter assembly. This chain is Urease accessory protein UreE, found in Yersinia mollaretii.